A 182-amino-acid polypeptide reads, in one-letter code: Bifunctional protein PyrR (182 aa).

The short motif at 97-109 (VVLVDDVIFRGRT) is the PRPP-binding element.

This sequence belongs to the purine/pyrimidine phosphoribosyltransferase family. PyrR subfamily.

The catalysed reaction is UMP + diphosphate = 5-phospho-alpha-D-ribose 1-diphosphate + uracil. Regulates the transcription of the pyrimidine nucleotide (pyr) operon in response to exogenous pyrimidines. Its function is as follows. Also displays a weak uracil phosphoribosyltransferase activity which is not physiologically significant. In Synechococcus sp. (strain JA-2-3B'a(2-13)) (Cyanobacteria bacterium Yellowstone B-Prime), this protein is Bifunctional protein PyrR.